The following is a 355-amino-acid chain: Probable aldo-keto reductase 3 (355 aa).

Tyr-70 serves as the catalytic Proton donor. His-138 is a substrate binding site. 217–227 (SPLGRGFFSSG) provides a ligand contact to NADP(+).

It belongs to the aldo/keto reductase family.

In Oryza sativa subsp. indica (Rice), this protein is Probable aldo-keto reductase 3.